Here is a 638-residue protein sequence, read N- to C-terminus: Threonine--tRNA ligase (638 aa).

A TGS domain is found at 1-61 (MPVITLPDGS…EHDARIEIVT (61 aa)). The segment at 243–534 (DHRKIAKAQD…LIEEYAGHFP (292 aa)) is catalytic. Zn(2+) contacts are provided by Cys334, His385, and His511.

The protein belongs to the class-II aminoacyl-tRNA synthetase family. As to quaternary structure, homodimer. Requires Zn(2+) as cofactor.

It is found in the cytoplasm. The enzyme catalyses tRNA(Thr) + L-threonine + ATP = L-threonyl-tRNA(Thr) + AMP + diphosphate + H(+). Its function is as follows. Catalyzes the attachment of threonine to tRNA(Thr) in a two-step reaction: L-threonine is first activated by ATP to form Thr-AMP and then transferred to the acceptor end of tRNA(Thr). Also edits incorrectly charged L-seryl-tRNA(Thr). The polypeptide is Threonine--tRNA ligase (Idiomarina loihiensis (strain ATCC BAA-735 / DSM 15497 / L2-TR)).